The sequence spans 191 residues: Molybdenum cofactor guanylyltransferase (191 aa).

GTP-binding positions include 13 to 15, Lys-26, Asp-72, and Asp-102; that span reads LAG. Asp-102 contributes to the Mg(2+) binding site.

Belongs to the MobA family. As to quaternary structure, monomer. Mg(2+) serves as cofactor.

The protein resides in the cytoplasm. It catalyses the reaction Mo-molybdopterin + GTP + H(+) = Mo-molybdopterin guanine dinucleotide + diphosphate. Its function is as follows. Transfers a GMP moiety from GTP to Mo-molybdopterin (Mo-MPT) cofactor (Moco or molybdenum cofactor) to form Mo-molybdopterin guanine dinucleotide (Mo-MGD) cofactor. This is Molybdenum cofactor guanylyltransferase from Pseudomonas putida (strain ATCC 700007 / DSM 6899 / JCM 31910 / BCRC 17059 / LMG 24140 / F1).